The primary structure comprises 372 residues: Segmentation polarity homeobox protein engrailed (372 aa).

Disordered regions lie at residues 1 to 35 (MAFE…YSPQ), 47 to 112 (YERG…LQPT), 196 to 246 (ERLS…QSNP), and 261 to 286 (DRPS…PRTA). Basic and acidic residues-rich tracts occupy residues 79–105 (DYYR…DRSR) and 197–215 (RLSR…KRPD). Over residues 216-244 (SASSIVSSTSSGAVSTCGSSDASSIQSQS) the composition is skewed to low complexity. The segment at residues 280–339 (EKRPRTAFSGAQLARLKHEFAENRYLTERRRQSLAAELGLAEAQIKIWFQNKRAKIKKAS) is a DNA-binding region (homeobox).

The protein belongs to the engrailed homeobox family. Expressed in the middle silk gland but not in the posterior silk gland during the fourth molt/fifth intermolt period.

It localises to the nucleus. This protein might be involved in the compartmentalization of the silk gland. The protein is Segmentation polarity homeobox protein engrailed (en) of Bombyx mori (Silk moth).